We begin with the raw amino-acid sequence, 113 residues long: Pro-FMRFamide-related neuropeptide FF (113 aa).

The first 20 residues, 1-20 (MDSRQAAALLVLLLLIDGGC), serve as a signal peptide directing secretion. The propeptide occupies 21–65 (AEGPGGQQEDQLSAEEDSEPLPPQDAQTSGSLLHYLLQAMERPGR). The tract at residues 22–48 (EGPGGQQEDQLSAEEDSEPLPPQDAQT) is disordered. A Phenylalanine amide modification is found at Phe-76. Residues 79-92 (NTQGSWRNEWLSPR) constitute a propeptide that is removed on maturation. Phe-110 is modified (phenylalanine amide).

The protein belongs to the FARP (FMRFamide related peptide) family.

The protein resides in the secreted. Its function is as follows. Morphine modulating peptides. Have wide-ranging physiologic effects, including the modulation of morphine-induced analgesia, elevation of arterial blood pressure, and increased somatostatin secretion from the pancreas. Neuropeptide FF potentiates and sensitizes ASIC1 and ASIC3 channels. The sequence is that of Pro-FMRFamide-related neuropeptide FF from Homo sapiens (Human).